The chain runs to 518 residues: MDQSMIALALFIILLVLLYKWSVAKYDVFSERGVSHEKPWPLIGNIPLKAMIGGMPVLKKMIELHTKHTGSPVYGIYALRDAVFFVRDPELIKLIGIKEFDHFVNHNSMHNNIQESILSKSLISLRDGRWKEMRNILTPAFTGSKMRIMYDLIQSCSEEGVIHIQEQLELSQDASIELEMKDYFTRFANDVIATVAFGISINSFRRKDNEFFRIGQAMSRISAWSVVKAMLYALFPRLMKVLRIQVLDTKNIDYFSSLVTAAMRYRQEHKVVRPDMIHLLMEAKQQRLADLSDKSKDELYYSEFTADDLLAQCLLFFFAGFEIISSSLCFLTHELCLNPTVQDRLYEEIISVHEELKGQPLTYDKLTKMKYLDMVVLEALRKWPPSISTDRECRQDIDLFDENGQKLFSARKGDVLQIPIFSLHHDPENFEDPEFFNPERFADGHALESRVYMPFGVGPRNCIGNRMALMELKSIVYQLLLNFKLLPAKRTSRDLLNDIRGHGLKPKNGFWLKFEARQ.

Residue cysteine 462 participates in heme binding.

It belongs to the cytochrome P450 family. Heme serves as cofactor.

Its subcellular location is the endoplasmic reticulum membrane. The protein localises to the microsome membrane. Functionally, may be involved in the metabolism of insect hormones and in the breakdown of synthetic insecticides. The polypeptide is Probable cytochrome P450 9h1 (Cyp9h1) (Drosophila melanogaster (Fruit fly)).